The chain runs to 513 residues: MMVDSRLLVSDRINGTTNKMNGALDHSDQPDPDAIKMFVGQIPRSWSEKELKDLFEPYGAVYQINVLRDRSQNPPQSKGCCFVTFYTRKAALEAQNALHNIKTLPGMHHPIQMKPADSEKSNAVEDRKLFIGMVSKKCNENDIRVMFSPFGQIEECRILRGPDGLSRGCAFVTFSTRAMAQNAIKAMHQSQTMEGCSSPIVVKFADTQKDKEQRRLQQQLAQQMQQLNTATWGNLTGLGALTPQYLALLQQATSSSNLGAFSGIQQMAGMNALQLQNLATLAAAAAAAQTSATTTNANPLSTTTSALGALTSPVAASTANSSAGAAMNSLTSLGTLQGLAGATVGLNNINALAGTVNIAQMLSGMAALNGGLGATGLTNGTAGTMDALTQAYSGIQQYAAAALPTLYSQSLLQQQSAAGSQKEGPEGANLFIYHLPQEFGDQDILQMFMPFGNVISAKVFIDKQTNLSKCFGFVSYDNPVSAQAAIQAMNGFQIGMKRLKVQLKRSKNDSKPY.

3 consecutive RRM domains span residues 35–118 (IKMF…PADS), 127–207 (RKLF…FADT), and 428–506 (ANLF…LKRS).

It belongs to the CELF/BRUNOL family.

The protein resides in the nucleus. Its subcellular location is the cytoplasm. Functionally, RNA-binding protein implicated in the regulation of several post-transcriptional events. May be involved in pre-mRNA alternative splicing, mRNA translation repression and stability. This chain is CUGBP Elav-like family member 2 (celf2), found in Xenopus tropicalis (Western clawed frog).